Reading from the N-terminus, the 402-residue chain is Propionate kinase (402 aa).

Asn-11 and Lys-18 together coordinate ATP. Asn-11 lines the Mg(2+) pocket. Substrate is bound at residue Arg-86. Catalysis depends on Asp-143, which acts as the Proton donor/acceptor. ATP contacts are provided by residues His-175, 203–207 (HLGNG), 278–280 (DLR), and 326–330 (GIGEN).

This sequence belongs to the acetokinase family. TdcD subfamily. Homodimer. Requires Mg(2+) as cofactor.

The enzyme catalyses propanoate + ATP = propanoyl phosphate + ADP. It participates in amino-acid degradation; L-threonine degradation via propanoate pathway; propanoate from L-threonine: step 4/4. Functionally, catalyzes the conversion of propionyl phosphate and ADP to propionate and ATP. This is Propionate kinase from Citrobacter koseri (strain ATCC BAA-895 / CDC 4225-83 / SGSC4696).